We begin with the raw amino-acid sequence, 529 residues long: Tyrosinase (529 aa).

An N-terminal signal peptide occupies residues M1 to G18. Residues H19 to S476 lie on the Lumenal, melanosome side of the membrane. N-linked (GlcNAc...) asparagine glycans are attached at residues N86, N111, and N161. Cu cation-binding residues include H180, H202, and H211. N-linked (GlcNAc...) asparagine glycosylation occurs at N230. The tract at residues S287–P313 is disordered. N-linked (GlcNAc...) asparagine glycosylation occurs at N337. Positions 363 and 367 each coordinate Cu cation. N371 carries N-linked (GlcNAc...) asparagine glycosylation. H390 contributes to the Cu cation binding site. The helical transmembrane segment at W477–S497 threads the bilayer. The Cytoplasmic segment spans residues L498 to L529.

Belongs to the tyrosinase family. In terms of assembly, forms an OPN3-dependent complex with DCT in response to blue light in melanocytes. Requires Cu(2+) as cofactor. In terms of processing, glycosylated.

The protein resides in the melanosome membrane. The protein localises to the melanosome. The enzyme catalyses 2 L-dopa + O2 = 2 L-dopaquinone + 2 H2O. It catalyses the reaction L-tyrosine + O2 = L-dopaquinone + H2O. It carries out the reaction 2 5,6-dihydroxyindole-2-carboxylate + O2 = 2 indole-5,6-quinone-2-carboxylate + 2 H2O. In terms of biological role, this is a copper-containing oxidase that functions in the formation of pigments such as melanins and other polyphenolic compounds. Catalyzes the initial and rate limiting step in the cascade of reactions leading to melanin production from tyrosine. In addition to hydroxylating tyrosine to DOPA (3,4-dihydroxyphenylalanine), also catalyzes the oxidation of DOPA to DOPA-quinone, and possibly the oxidation of DHI (5,6-dihydroxyindole) to indole-5,6 quinone. This is Tyrosinase from Homo sapiens (Human).